A 103-amino-acid polypeptide reads, in one-letter code: MQNQRIRIRLKAFDHRLIDQATAEIVETAKRTGAQVRGPIPLPTRKERFTVLISPHVNKDARDQYEIRTHLRLVDIVEPTEKTVDALMRLDLAAGVDVQISLG.

It belongs to the universal ribosomal protein uS10 family. As to quaternary structure, part of the 30S ribosomal subunit.

Its function is as follows. Involved in the binding of tRNA to the ribosomes. This chain is Small ribosomal subunit protein uS10, found in Escherichia coli O127:H6 (strain E2348/69 / EPEC).